The sequence spans 882 residues: Alanine--tRNA ligase (882 aa).

4 residues coordinate Zn(2+): His-574, His-578, Cys-682, and His-686. Positions 853 to 882 are disordered; that stretch reads GGRGGGKGALAQGGGLDPRKAREALPGLLP. Gly residues predominate over residues 854–868; it reads GRGGGKGALAQGGGL.

It belongs to the class-II aminoacyl-tRNA synthetase family. It depends on Zn(2+) as a cofactor.

Its subcellular location is the cytoplasm. The catalysed reaction is tRNA(Ala) + L-alanine + ATP = L-alanyl-tRNA(Ala) + AMP + diphosphate. Catalyzes the attachment of alanine to tRNA(Ala) in a two-step reaction: alanine is first activated by ATP to form Ala-AMP and then transferred to the acceptor end of tRNA(Ala). Also edits incorrectly charged Ser-tRNA(Ala) and Gly-tRNA(Ala) via its editing domain. In Thermus thermophilus (strain ATCC BAA-163 / DSM 7039 / HB27), this protein is Alanine--tRNA ligase.